The sequence spans 310 residues: Protein CUP-SHAPED COTYLEDON 1 (310 aa).

The NAC domain maps to 20–172 (MPPGFRFHPT…EWVLCKVCLK (153 aa)). Residues 119-178 (LGMKKTLVFYKGRAPKGEKSCWVMHEYRLDGKFSYHYISSSAKDEWVLCKVCLKSGVVSR) mediate DNA binding. Involved in transactivation activity stretches follow at residues 179–210 (ETNL…NTFA) and 306–310 (WPFTL).

In terms of tissue distribution, expressed in inflorescence stems, rosette leaves, aerial parts of seedlings, flowers, floral buds and roots.

It localises to the nucleus. Transcription activator of STM and KNAT6. Involved in molecular mechanisms regulating shoot apical meristem (SAM) formation during embryogenesis and organ separation. Required for the fusion of septa of gynoecia along the length of the ovaries. Activates the shoot formation in callus in a STM-dependent manner. Seems to act as an inhibitor of cell division. The sequence is that of Protein CUP-SHAPED COTYLEDON 1 (NAC054) from Arabidopsis thaliana (Mouse-ear cress).